The chain runs to 268 residues: Serine/arginine-rich splicing factor SR30 (268 aa).

RRM domains are found at residues 7-82 and 109-187; these read RTIY…IAHG and YRVL…EYES. Residues 186–199 show a composition bias toward basic and acidic residues; it reads ESRSVSRSPDDSKS. The segment at 186-268 is disordered; it reads ESRSVSRSPD…NSPVSPVISG (83 aa). Phosphoserine occurs at positions 193, 210, 212, 214, 219, 221, 227, 236, 246, 256, and 260. Positions 207–247 are enriched in low complexity; the sequence is RGPSCSYSSKSRSVSPARSISPRSRPLSRSRSLYSSVSRSQ. Positions 257–268 are enriched in low complexity; it reads RSNSPVSPVISG.

Belongs to the splicing factor SR family. SR subfamily. Component of the spliceosome. Interacts with SNRNP35, CYP59 and CYP63. Post-translationally, phosphorylated. As to expression, ubiquitous.

It is found in the nucleus speckle. It localises to the nucleus. Its subcellular location is the nucleoplasm. The protein localises to the cytoplasm. Functionally, regulatory splicing factor that modulates alternative splicing and gene expression in specific cell types. Autoregulates its own expression. Probably involved in intron recognition and spliceosome assembly. This Arabidopsis thaliana (Mouse-ear cress) protein is Serine/arginine-rich splicing factor SR30 (SR30).